Reading from the N-terminus, the 379-residue chain is Homoserine O-succinyltransferase (379 aa).

Positions 51–360 (NAVLICHALS…DAPQGHDAFL (310 aa)) constitute an AB hydrolase-1 domain. Serine 157 serves as the catalytic Nucleophile. Residue arginine 227 coordinates substrate. Residues aspartate 323 and histidine 356 contribute to the active site. Aspartate 357 serves as a coordination point for substrate.

It belongs to the AB hydrolase superfamily. MetX family. Homodimer.

It localises to the cytoplasm. It catalyses the reaction L-homoserine + succinyl-CoA = O-succinyl-L-homoserine + CoA. Its pathway is amino-acid biosynthesis; L-methionine biosynthesis via de novo pathway; O-succinyl-L-homoserine from L-homoserine: step 1/1. Functionally, transfers a succinyl group from succinyl-CoA to L-homoserine, forming succinyl-L-homoserine. This is Homoserine O-succinyltransferase from Stutzerimonas stutzeri (strain A1501) (Pseudomonas stutzeri).